A 598-amino-acid chain; its full sequence is MSDLSHIRNFSIIAHIDHGKSTLADRFIQMCGGLAEREMEAQVLDSMDLERERGITIKAHSVTLYYKAKDGVTYQLNFIDTPGHVDFTYEVSRSLAACEGALLVVDAGQGVEAQSVANCYTAIEQGLEVMPVLNKIDLPQAEPDRVKDEIEKIIGIDATDAVTCSAKTGLGVDEVLERLVATIPAPIGNIEDPLQALIIDSWFDNYLGVVSLVRVRHGRVKKGDKILVKSTGKVHLVDSVGVFNPKHTATADLKAGEVGFIIASIKDIHGAPVGDTLTLSSTPDVPVLPGFKRIQPQVYAGLFPVSSDDFEDFREALQKLTLNDSSLQYTPESSDALGFGFRCGFLGMLHMEIIQERLEREYDLDLITTAPTVIFELVLKTGETIYVDNPSKLPDVSSIEDMREPIVRANILVPQEHLGNVITLCIEKRGVQVDMLFLGNQVQVTYDLPMNEVVLDFFDRLKSTSRGYASLDYHFDRYQSANLVKLDVLINGDKVDALALIVHRDNSHFKGRQLTEKMKELIPRQMFDVAIQAAIGGQIVARTTVKALRKNVLAKCYGGDVSRKKKLLEKQKAGKKRMKQVGNVEIPQEAFLAVLRLE.

One can recognise a tr-type G domain in the interval 5 to 187; sequence SHIRNFSIIA…RLVATIPAPI (183 aa). GTP-binding positions include 17–22 and 134–137; these read DHGKST and NKID.

It belongs to the TRAFAC class translation factor GTPase superfamily. Classic translation factor GTPase family. LepA subfamily.

It localises to the cell inner membrane. It carries out the reaction GTP + H2O = GDP + phosphate + H(+). Its function is as follows. Required for accurate and efficient protein synthesis under certain stress conditions. May act as a fidelity factor of the translation reaction, by catalyzing a one-codon backward translocation of tRNAs on improperly translocated ribosomes. Back-translocation proceeds from a post-translocation (POST) complex to a pre-translocation (PRE) complex, thus giving elongation factor G a second chance to translocate the tRNAs correctly. Binds to ribosomes in a GTP-dependent manner. In Pseudomonas fluorescens (strain Pf0-1), this protein is Elongation factor 4.